A 630-amino-acid polypeptide reads, in one-letter code: 1-deoxy-D-xylulose-5-phosphate synthase (630 aa).

Thiamine diphosphate-binding positions include histidine 80 and 121-123 (GHS). Residue aspartate 152 participates in Mg(2+) binding. Thiamine diphosphate-binding positions include 153–154 (GA), asparagine 181, tyrosine 288, and glutamate 370. Asparagine 181 serves as a coordination point for Mg(2+).

Belongs to the transketolase family. DXPS subfamily. Homodimer. It depends on Mg(2+) as a cofactor. The cofactor is thiamine diphosphate.

It catalyses the reaction D-glyceraldehyde 3-phosphate + pyruvate + H(+) = 1-deoxy-D-xylulose 5-phosphate + CO2. It functions in the pathway metabolic intermediate biosynthesis; 1-deoxy-D-xylulose 5-phosphate biosynthesis; 1-deoxy-D-xylulose 5-phosphate from D-glyceraldehyde 3-phosphate and pyruvate: step 1/1. Its function is as follows. Catalyzes the acyloin condensation reaction between C atoms 2 and 3 of pyruvate and glyceraldehyde 3-phosphate to yield 1-deoxy-D-xylulose-5-phosphate (DXP). In Colwellia psychrerythraea (strain 34H / ATCC BAA-681) (Vibrio psychroerythus), this protein is 1-deoxy-D-xylulose-5-phosphate synthase.